A 124-amino-acid chain; its full sequence is uncharacterized protein (124 aa).

2 disordered regions span residues 1–26 (MRRQEALVVTAGTASEASRDGEQPRP) and 100–124 (IPGQQSRNCSLPQTKYYSRHGGLRR). Positions 102–115 (GQQSRNCSLPQTKY) are enriched in polar residues.

The protein localises to the cytoplasm. It is found in the cytoskeleton. It localises to the cilium basal body. This is an uncharacterized protein from Rattus norvegicus (Rat).